Consider the following 905-residue polypeptide: Translation initiation factor IF-2 (905 aa).

3 disordered regions span residues 52 to 84, 116 to 230, and 269 to 318; these read QSHG…SKSV, AKKR…QKKT, and FEKE…FEKP. Residues 65–84 are compositionally biased toward polar residues; it reads KSKTTSTARVTGSSGKSKSV. Over residues 116-138 the composition is skewed to basic and acidic residues; the sequence is AKKRAEEEAKKREQVKKEAEERQ. A compositionally biased stretch (low complexity) spans 165–178; that stretch reads VVVKKGSKAAAAAK. Basic and acidic residues-rich tracts occupy residues 190 to 230 and 269 to 278; these read PKVE…QKKT and FEKERREIKR. Positions 406 to 575 constitute a tr-type G domain; it reads TRPPVVTIMG…NLQAELMELE (170 aa). Positions 415 to 422 are G1; that stretch reads GHVDHGKT. 415 to 422 is a binding site for GTP; it reads GHVDHGKT. Residues 440 to 444 form a G2 region; that stretch reads GITQH. The segment at 461–464 is G3; sequence DTPG. GTP is bound by residues 461–465 and 515–518; these read DTPGH and NKMD. The G4 stretch occupies residues 515-518; the sequence is NKMD. The interval 551-553 is G5; sequence SAK.

This sequence belongs to the TRAFAC class translation factor GTPase superfamily. Classic translation factor GTPase family. IF-2 subfamily.

The protein localises to the cytoplasm. Functionally, one of the essential components for the initiation of protein synthesis. Protects formylmethionyl-tRNA from spontaneous hydrolysis and promotes its binding to the 30S ribosomal subunits. Also involved in the hydrolysis of GTP during the formation of the 70S ribosomal complex. The polypeptide is Translation initiation factor IF-2 (Psychrobacter sp. (strain PRwf-1)).